Consider the following 139-residue polypeptide: Cuticle protein 76 (139 aa).

6 repeat units span residues 7–10 (AAPA), 68–71 (AAPA), 75–78 (AAPV), 93–95 (AAP), 105–108 (AAPA), and 121–124 (AAPA).

Functionally, component of the cuticle of migratory locust which contains more than 100 different structural proteins. In Locusta migratoria (Migratory locust), this protein is Cuticle protein 76.